Reading from the N-terminus, the 447-residue chain is GTPase Der (447 aa).

2 EngA-type G domains span residues 4 to 165 (QIIT…PEEE) and 180 to 357 (LQIV…KIWN). GTP is bound by residues 10 to 17 (GRPNVGKS), 57 to 61 (DTPGL), 119 to 122 (NKCE), 186 to 193 (GRPNAGKS), 233 to 237 (DTAGL), and 298 to 301 (NKWD). Positions 358–443 (KKITTSKLNE…PIRFIYVKTK (86 aa)) constitute a KH-like domain.

It belongs to the TRAFAC class TrmE-Era-EngA-EngB-Septin-like GTPase superfamily. EngA (Der) GTPase family. As to quaternary structure, associates with the 50S ribosomal subunit.

Its function is as follows. GTPase that plays an essential role in the late steps of ribosome biogenesis. This is GTPase Der from Rickettsia peacockii (strain Rustic).